Here is a 437-residue protein sequence, read N- to C-terminus: GTPase Der (437 aa).

EngA-type G domains are found at residues 4 to 167 (PVIA…PEDE) and 176 to 351 (IRIS…ENHN). GTP is bound by residues 10-17 (GRPNVGKS), 57-61 (DTGGI), 119-122 (NKID), 182-189 (GRPNVGKS), 229-233 (DTAGM), and 294-297 (NKWD). Residues 352-436 (LRVPTHVLND…PIKIIARKKN (85 aa)) enclose the KH-like domain.

This sequence belongs to the TRAFAC class TrmE-Era-EngA-EngB-Septin-like GTPase superfamily. EngA (Der) GTPase family. As to quaternary structure, associates with the 50S ribosomal subunit.

In terms of biological role, GTPase that plays an essential role in the late steps of ribosome biogenesis. The protein is GTPase Der of Halalkalibacterium halodurans (strain ATCC BAA-125 / DSM 18197 / FERM 7344 / JCM 9153 / C-125) (Bacillus halodurans).